We begin with the raw amino-acid sequence, 179 residues long: Large ribosomal subunit protein bL17 (179 aa).

Residues 127–179 form a disordered region; that stretch reads TDTLPDTVIDTGPDSAPDPVPGSEPGSAAGDLPDADTAPADPGESSSNQRVIR. Low complexity predominate over residues 154 to 168; it reads AAGDLPDADTAPADP. Polar residues predominate over residues 170 to 179; it reads ESSSNQRVIR.

It belongs to the bacterial ribosomal protein bL17 family. As to quaternary structure, part of the 50S ribosomal subunit. Contacts protein L32.

This chain is Large ribosomal subunit protein bL17, found in Tropheryma whipplei (strain TW08/27) (Whipple's bacillus).